We begin with the raw amino-acid sequence, 425 residues long: Serine--tRNA ligase (425 aa).

L-serine is bound at residue 233-235 (TAE). 264–266 (RAE) contributes to the ATP binding site. L-serine is bound at residue E287. 351-354 (EISS) contacts ATP. Residue S387 participates in L-serine binding.

The protein belongs to the class-II aminoacyl-tRNA synthetase family. Type-1 seryl-tRNA synthetase subfamily. As to quaternary structure, homodimer. The tRNA molecule binds across the dimer.

The protein localises to the cytoplasm. The enzyme catalyses tRNA(Ser) + L-serine + ATP = L-seryl-tRNA(Ser) + AMP + diphosphate + H(+). The catalysed reaction is tRNA(Sec) + L-serine + ATP = L-seryl-tRNA(Sec) + AMP + diphosphate + H(+). It functions in the pathway aminoacyl-tRNA biosynthesis; selenocysteinyl-tRNA(Sec) biosynthesis; L-seryl-tRNA(Sec) from L-serine and tRNA(Sec): step 1/1. In terms of biological role, catalyzes the attachment of serine to tRNA(Ser). Is also able to aminoacylate tRNA(Sec) with serine, to form the misacylated tRNA L-seryl-tRNA(Sec), which will be further converted into selenocysteinyl-tRNA(Sec). In Clostridium perfringens (strain ATCC 13124 / DSM 756 / JCM 1290 / NCIMB 6125 / NCTC 8237 / Type A), this protein is Serine--tRNA ligase.